Reading from the N-terminus, the 116-residue chain is U16-barytoxin-Tl1d (116 aa).

A signal peptide spans 1 to 20 (MKTIIVFLSLLVLATKFGDA). Positions 21–74 (NEGVNQEQMKEVIQNEFREDFLNEMAAMSLLQQLEAIESTLLEKEADRNSRQKR) are excised as a propeptide. 3 disulfide bridges follow: C75/C90, C82/C95, and C89/C110.

Belongs to the neurotoxin 14 (magi-1) family. 06 (ICK-Trit) subfamily. In terms of tissue distribution, expressed by the venom gland.

The protein localises to the secreted. In terms of biological role, ion channel inhibitor. The chain is U16-barytoxin-Tl1d from Trittame loki (Brush-footed trapdoor spider).